Here is a 453-residue protein sequence, read N- to C-terminus: Protein amnionless (453 aa).

An N-terminal signal peptide occupies residues 1 to 19 (MGVLGRVLLWLQLCALTQA). Residues 20–357 (VSKLWVPNTD…ESGAHVWGSS (338 aa)) lie on the Extracellular side of the membrane. N35 is a glycosylation site (N-linked (GlcNAc...) asparagine). 6 disulfides stabilise this stretch: C43–C96, C137–C213, C205–C211, C223–C249, C234–C250, and C239–C253. An interaction with CUBN region spans residues 67–87 (SDMLLPLDGELVLASGAGFGV). The VWFC domain occupies 202 to 254 (PEDCADPSGCVCGNAEAQPWICAALLQPLGGRCPQAACHSALRPQGQCCDLCG). A helical transmembrane segment spans residues 358–378 (AAGLAGGVAAAVLLALLVLLV). Over 379 to 453 (APPLLRRAGR…PLFAGAEAEA (75 aa)) the chain is Cytoplasmic.

Interacts (via extracellular region) with CUBN/cubilin, giving rise to a huge complex containing one AMN chain and three CUBN chains. N-glycosylated. In terms of processing, a soluble form arises by proteolytic removal of the membrane anchor. Detected in proximal tubules in the kidney cortex (at protein level). Long isoforms are highly expressed in small intestine, colon and kidney (renal proximal tubule epithelial cells). Shorter isoforms are detected at lower levels in testis, thymus and peripheral blood leukocytes.

It localises to the apical cell membrane. The protein resides in the cell membrane. It is found in the endosome membrane. Its subcellular location is the membrane. The protein localises to the coated pit. It localises to the secreted. Its function is as follows. Membrane-bound component of the endocytic receptor formed by AMN and CUBN. Required for normal CUBN glycosylation and trafficking to the cell surface. The complex formed by AMN and CUBN is required for efficient absorption of vitamin B12. Required for normal CUBN-mediated protein transport in the kidney. This is Protein amnionless (AMN) from Homo sapiens (Human).